The chain runs to 375 residues: Queuine tRNA-ribosyltransferase (375 aa).

The active-site Proton acceptor is the Asp94. Substrate is bound by residues 94–98, Asp148, Gln191, and Gly218; that span reads DSGGF. An RNA binding region spans residues 249–255; it reads GVGSPDD. Asp268 serves as the catalytic Nucleophile. The tract at residues 273–277 is RNA binding; important for wobble base 34 recognition; that stretch reads TRIAR. 4 residues coordinate Zn(2+): Cys306, Cys308, Cys311, and His337.

This sequence belongs to the queuine tRNA-ribosyltransferase family. In terms of assembly, homodimer. Within each dimer, one monomer is responsible for RNA recognition and catalysis, while the other monomer binds to the replacement base PreQ1. Zn(2+) serves as cofactor.

It carries out the reaction 7-aminomethyl-7-carbaguanine + guanosine(34) in tRNA = 7-aminomethyl-7-carbaguanosine(34) in tRNA + guanine. It functions in the pathway tRNA modification; tRNA-queuosine biosynthesis. In terms of biological role, catalyzes the base-exchange of a guanine (G) residue with the queuine precursor 7-aminomethyl-7-deazaguanine (PreQ1) at position 34 (anticodon wobble position) in tRNAs with GU(N) anticodons (tRNA-Asp, -Asn, -His and -Tyr). Catalysis occurs through a double-displacement mechanism. The nucleophile active site attacks the C1' of nucleotide 34 to detach the guanine base from the RNA, forming a covalent enzyme-RNA intermediate. The proton acceptor active site deprotonates the incoming PreQ1, allowing a nucleophilic attack on the C1' of the ribose to form the product. After dissociation, two additional enzymatic reactions on the tRNA convert PreQ1 to queuine (Q), resulting in the hypermodified nucleoside queuosine (7-(((4,5-cis-dihydroxy-2-cyclopenten-1-yl)amino)methyl)-7-deazaguanosine). This chain is Queuine tRNA-ribosyltransferase, found in Thermoanaerobacter pseudethanolicus (strain ATCC 33223 / 39E) (Clostridium thermohydrosulfuricum).